The following is a 283-amino-acid chain: Ubiquinone biosynthesis protein COQ4, mitochondrial (283 aa).

The transit peptide at 1-25 (MAIAKSVRARAVGLRSLRVLCAQRS) directs the protein to the mitochondrion. The Zn(2+) site is built by His-166, Asp-167, His-170, and Glu-182.

Belongs to the COQ4 family. As to quaternary structure, component of a multi-subunit COQ enzyme complex, composed of at least COQ3, COQ4, COQ5, COQ6, COQ7 and COQ9. Zn(2+) serves as cofactor.

Its subcellular location is the mitochondrion inner membrane. The enzyme catalyses a 4-hydroxy-3-methoxy-5-(all-trans-polyprenyl)benzoate + H(+) = a 2-methoxy-6-(all-trans-polyprenyl)phenol + CO2. It functions in the pathway cofactor biosynthesis; ubiquinone biosynthesis. Its function is as follows. Lyase that catalyzes the C1-decarboxylation of 4-hydroxy-3-methoxy-5-(all-trans-polyprenyl)benzoic acid into 2-methoxy-6-(all-trans-polyprenyl)phenol during ubiquinone biosynthesis. The sequence is that of Ubiquinone biosynthesis protein COQ4, mitochondrial from Coccidioides immitis (strain RS) (Valley fever fungus).